An 81-amino-acid polypeptide reads, in one-letter code: Cell division protein ZapB (81 aa).

Positions 6–80 (EVFEKLEAKV…LQALLGRMEE (75 aa)) form a coiled coil. The segment covering 38 to 47 (SLAQDVQSAQ) has biased composition (polar residues). The disordered stretch occupies residues 38-67 (SLAQDVQSAQHQREELERENNHLKEQQSGW). Basic and acidic residues predominate over residues 48-62 (HQREELERENNHLKE).

Belongs to the ZapB family. In terms of assembly, homodimer. The ends of the coiled-coil dimer bind to each other, forming polymers. Interacts with FtsZ.

It is found in the cytoplasm. Non-essential, abundant cell division factor that is required for proper Z-ring formation. It is recruited early to the divisome by direct interaction with FtsZ, stimulating Z-ring assembly and thereby promoting cell division earlier in the cell cycle. Its recruitment to the Z-ring requires functional FtsA or ZipA. This chain is Cell division protein ZapB, found in Citrobacter koseri (strain ATCC BAA-895 / CDC 4225-83 / SGSC4696).